The primary structure comprises 619 residues: Interferon-activable protein 204 (619 aa).

The Pyrin domain maps to 1–88; that stretch reads MVNEYKRIVL…AEILKKERSE (88 aa). The Nuclear export signal signature appears at 24 to 35; that stretch reads LFKSLLARDLNL. Basic and acidic residues predominate over residues 86–99; sequence RSEVTGETSLEKNG. Positions 86–223 are disordered; it reads RSEVTGETSL…QNQNIPRGAV (138 aa). Over residues 122–153 the composition is skewed to low complexity; it reads TSATQEETSTAQAGTSTAQARTSTAQAGTSTA. A run of 3 repeats spans residues 134–140, 141–147, and 148–154. A 3 X 7 AA tandem repeats of A-[GR]-T-S-T-A-Q region spans residues 134 to 154; that stretch reads AGTSTAQARTSTAQAGTSTAQ. Residues 150-157 carry the Nuclear localization signal motif; it reads TSTAQKRK. Basic and acidic residues predominate over residues 159–176; sequence MREEETGVKKSKAAKEPD. A compositionally biased stretch (low complexity) spans 190–206; the sequence is SPILHSSSSASSNIPSA. Over residues 207–218 the composition is skewed to polar residues; sequence KNQKSQPQNQNI. HIN-200 domains follow at residues 213-413 and 417-615; these read PQNQ…IKIS and NVPK…MQVI. Residues 550-614 are interaction with ID2; it reads KKTERNKFIY…RSVRHSYMQV (65 aa).

Belongs to the HIN-200 family. As to quaternary structure, interacts with UBTF. Interacts with RUNX2. Interacts with ID1, ID2 and ID3. Interacts with STING. Acetylated upon bacterial infection, leading to translocation from nucleus to cytoplasm and subsequent recruitment of STING to activate IFN-beta production. In terms of tissue distribution, present in osteoblasts (at protein level).

It localises to the nucleus. It is found in the nucleolus. Its subcellular location is the cytoplasm. Functionally, interferon-stimulated protein that plays a role in several biological processes including cell differentiation, autophagy and innate immunity. Cooperates with CGAS to sense dsDNA and activates the STING-dependent type I IFN pathway. Mechanistically, gets acetylated upon bacterial infection and then translocates from nucleus into cytoplasm to recruit STING for activation of TBK1-dependent IRF3 nuclear translocation and IFN-beta release. Inhibits the transcription of ribosomal RNA. May inhibit DNA binding by UBTF. Inhibits cell growth via p53/TP53 and RB1-dependent and independent pathways. Acts as a coactivator of RUNX2 during osteogenesis. May be involved in macrophage differentiation. Enables skeletal muscle and cardiac myocyte differentiation by sequestring Id proteins in the cytosol and promoting their ubiquitination and subsequent degradation. This chain is Interferon-activable protein 204 (Ifi204), found in Mus musculus (Mouse).